The primary structure comprises 495 residues: Phosphomethylpyrimidine synthase (495 aa).

Residues Asn-125, Met-154, Tyr-183, His-219, 239–241, 280–283, and Glu-319 each bind substrate; these read SRG and DGLR. His-323 contributes to the Zn(2+) binding site. Residue Tyr-346 participates in substrate binding. His-387 provides a ligand contact to Zn(2+). [4Fe-4S] cluster contacts are provided by Cys-467, Cys-470, and Cys-475.

This sequence belongs to the ThiC family. The cofactor is [4Fe-4S] cluster.

It carries out the reaction 5-amino-1-(5-phospho-beta-D-ribosyl)imidazole + S-adenosyl-L-methionine = 4-amino-2-methyl-5-(phosphooxymethyl)pyrimidine + CO + 5'-deoxyadenosine + formate + L-methionine + 3 H(+). Its pathway is cofactor biosynthesis; thiamine diphosphate biosynthesis. In terms of biological role, catalyzes the synthesis of the hydroxymethylpyrimidine phosphate (HMP-P) moiety of thiamine from aminoimidazole ribotide (AIR) in a radical S-adenosyl-L-methionine (SAM)-dependent reaction. The polypeptide is Phosphomethylpyrimidine synthase (Leptospira interrogans serogroup Icterohaemorrhagiae serovar copenhageni (strain Fiocruz L1-130)).